Here is a 128-residue protein sequence, read N- to C-terminus: Small ribosomal subunit protein uS11 (128 aa).

Belongs to the universal ribosomal protein uS11 family. In terms of assembly, part of the 30S ribosomal subunit. Interacts with proteins S7 and S18. Binds to IF-3.

Located on the platform of the 30S subunit, it bridges several disparate RNA helices of the 16S rRNA. Forms part of the Shine-Dalgarno cleft in the 70S ribosome. This chain is Small ribosomal subunit protein uS11, found in Synechococcus sp. (strain JA-2-3B'a(2-13)) (Cyanobacteria bacterium Yellowstone B-Prime).